The sequence spans 186 residues: Elongation factor P (186 aa).

Belongs to the elongation factor P family.

The protein localises to the cytoplasm. It participates in protein biosynthesis; polypeptide chain elongation. Involved in peptide bond synthesis. Stimulates efficient translation and peptide-bond synthesis on native or reconstituted 70S ribosomes in vitro. Probably functions indirectly by altering the affinity of the ribosome for aminoacyl-tRNA, thus increasing their reactivity as acceptors for peptidyl transferase. The polypeptide is Elongation factor P (Ruminiclostridium cellulolyticum (strain ATCC 35319 / DSM 5812 / JCM 6584 / H10) (Clostridium cellulolyticum)).